The sequence spans 95 residues: Small ribosomal subunit protein bS6 (95 aa).

Belongs to the bacterial ribosomal protein bS6 family.

Its function is as follows. Binds together with bS18 to 16S ribosomal RNA. The protein is Small ribosomal subunit protein bS6 of Corynebacterium urealyticum (strain ATCC 43042 / DSM 7109).